The following is a 93-amino-acid chain: UPF0147 protein MM_1385 (93 aa).

The protein belongs to the UPF0147 family.

The polypeptide is UPF0147 protein MM_1385 (Methanosarcina mazei (strain ATCC BAA-159 / DSM 3647 / Goe1 / Go1 / JCM 11833 / OCM 88) (Methanosarcina frisia)).